A 479-amino-acid chain; its full sequence is Adenosylhomocysteinase (479 aa).

Threonine 66, aspartate 142, and glutamate 203 together coordinate substrate. NAD(+) is bound at residue 204–206 (TTT). The substrate site is built by lysine 233 and aspartate 237. NAD(+) is bound by residues asparagine 238, 267-272 (GYGDVG), glutamate 290, asparagine 325, 346-348 (IGH), and asparagine 394.

It belongs to the adenosylhomocysteinase family. The cofactor is NAD(+).

The protein localises to the cytoplasm. It catalyses the reaction S-adenosyl-L-homocysteine + H2O = L-homocysteine + adenosine. The protein operates within amino-acid biosynthesis; L-homocysteine biosynthesis; L-homocysteine from S-adenosyl-L-homocysteine: step 1/1. In terms of biological role, may play a key role in the regulation of the intracellular concentration of adenosylhomocysteine. The sequence is that of Adenosylhomocysteinase from Nitratidesulfovibrio vulgaris (strain DSM 19637 / Miyazaki F) (Desulfovibrio vulgaris).